A 501-amino-acid chain; its full sequence is Inactive cytidine monophosphate-N-acetylneuraminic acid hydroxylase (501 aa).

It belongs to the CMP-Neu5Ac hydroxylase family. Widely expressed. Highly expressed in thymus. Not expressed in brain. May be expressed in adult stem cells (at protein level).

The protein localises to the cytoplasm. Its function is as follows. Sialic acids are components of carbohydrate chains of glycoconjugates and are involved in cell-cell recognition and cell-pathogen interactions. That protein has no CMP-N-acetylneuraminate monooxygenase activity and is not able to convert CMP-N-acetylneuraminic acid (CMP-Neu5Ac) into its hydroxylated derivative CMP-N-glycolylneuraminic acid (CMP-Neu5Gc), a sialic acid abundantly expressed at the surface of many cells in vertebrates. However, it may play a role in Wnt signaling. In Homo sapiens (Human), this protein is Inactive cytidine monophosphate-N-acetylneuraminic acid hydroxylase (CMAHP).